The following is a 285-amino-acid chain: Probable endonuclease 4 (285 aa).

Zn(2+) is bound by residues His69, His109, Glu145, Asp179, His182, His216, Asp229, His231, and Glu261.

This sequence belongs to the AP endonuclease 2 family. Zn(2+) is required as a cofactor.

The enzyme catalyses Endonucleolytic cleavage to 5'-phosphooligonucleotide end-products.. Functionally, endonuclease IV plays a role in DNA repair. It cleaves phosphodiester bonds at apurinic or apyrimidinic (AP) sites, generating a 3'-hydroxyl group and a 5'-terminal sugar phosphate. The sequence is that of Probable endonuclease 4 from Salmonella typhimurium (strain LT2 / SGSC1412 / ATCC 700720).